Consider the following 375-residue polypeptide: Growth/differentiation factor 8 (375 aa).

Positions 1–18 (MQKLQISVYIYLFMLIVA) are cleaved as a signal peptide. Residues 19 to 266 (GPVDLNEKSE…VTDTPKRSRR (248 aa)) constitute a propeptide that is removed on maturation. 2 N-linked (GlcNAc...) asparagine glycosylation sites follow: Asn-47 and Asn-71. Intrachain disulfides connect Cys-272–Cys-282, Cys-281–Cys-340, Cys-309–Cys-372, and Cys-313–Cys-374.

It belongs to the TGF-beta family. Homodimer; disulfide-linked. Interacts with WFIKKN2, leading to inhibit its activity. Interacts with FSTL3. Post-translationally, synthesized as large precursor molecule that undergoes proteolytic cleavage to generate an N-terminal propeptide and a disulfide linked C-terminal dimer, which is the biologically active molecule. The circulating form consists of a latent complex of the C-terminal dimer and other proteins, including its propeptide, which maintain the C-terminal dimer in a latent, inactive state. Ligand activation requires additional cleavage of the prodomain by a tolloid-like metalloproteinase.

Its subcellular location is the secreted. Acts specifically as a negative regulator of skeletal muscle growth. The chain is Growth/differentiation factor 8 (MSTN) from Taurotragus derbianus (Giant eland).